The chain runs to 374 residues: Phosphatidyl-myo-inositol mannosyltransferase (374 aa).

GDP-alpha-D-mannose contacts are provided by Tyr-9 and Gly-16. A 1,2-diacyl-sn-glycero-3-phospho-(1D-myo-inositol) contacts are provided by residues Gln-18, 62–63, and Arg-68; that span reads YN. GDP-alpha-D-mannose is bound by residues Arg-196, 201 to 202, 251 to 253, Lys-256, 274 to 278, and Glu-282; these read RK, VDD, and ESFGI.

The protein belongs to the glycosyltransferase group 1 family. Glycosyltransferase 4 subfamily. In terms of assembly, monomer. Requires Mg(2+) as cofactor.

The protein resides in the cell membrane. The catalysed reaction is a 1,2-diacyl-sn-glycero-3-phospho-(1D-myo-inositol) + GDP-alpha-D-mannose = a 1,2-diacyl-sn-glycero-3-phospho-[alpha-D-mannopyranosyl-(1&lt;-&gt;6)-D-myo-inositol] + GDP + H(+). It functions in the pathway phospholipid metabolism; phosphatidylinositol metabolism. Functionally, involved in the biosynthesis of phosphatidyl-myo-inositol mannosides (PIM) which are early precursors in the biosynthesis of lipomannans (LM) and lipoarabinomannans (LAM). Catalyzes the addition of a mannosyl residue from GDP-D-mannose (GDP-Man) to the position 2 of the carrier lipid phosphatidyl-myo-inositol (PI) to generate a phosphatidyl-myo-inositol bearing an alpha-1,2-linked mannose residue (PIM1). The sequence is that of Phosphatidyl-myo-inositol mannosyltransferase from Mycobacterium leprae (strain TN).